A 202-amino-acid polypeptide reads, in one-letter code: IMP cyclohydrolase (202 aa).

The protein belongs to the archaeal IMP cyclohydrolase family.

It carries out the reaction IMP + H2O = 5-formamido-1-(5-phospho-D-ribosyl)imidazole-4-carboxamide. Its pathway is purine metabolism; IMP biosynthesis via de novo pathway; IMP from 5-formamido-1-(5-phospho-D-ribosyl)imidazole-4-carboxamide: step 1/1. Its function is as follows. Catalyzes the cyclization of 5-formylamidoimidazole-4-carboxamide ribonucleotide to IMP. The protein is IMP cyclohydrolase of Methanothermobacter thermautotrophicus (strain ATCC 29096 / DSM 1053 / JCM 10044 / NBRC 100330 / Delta H) (Methanobacterium thermoautotrophicum).